Here is a 347-residue protein sequence, read N- to C-terminus: Phosphoribosylformylglycinamidine cyclo-ligase (347 aa).

This sequence belongs to the AIR synthase family.

The protein localises to the cytoplasm. It catalyses the reaction 2-formamido-N(1)-(5-O-phospho-beta-D-ribosyl)acetamidine + ATP = 5-amino-1-(5-phospho-beta-D-ribosyl)imidazole + ADP + phosphate + H(+). The protein operates within purine metabolism; IMP biosynthesis via de novo pathway; 5-amino-1-(5-phospho-D-ribosyl)imidazole from N(2)-formyl-N(1)-(5-phospho-D-ribosyl)glycinamide: step 2/2. The protein is Phosphoribosylformylglycinamidine cyclo-ligase of Yersinia pestis.